Consider the following 451-residue polypeptide: UDP-N-acetylmuramoylalanine--D-glutamate ligase (451 aa).

119 to 125 (GSNGKTT) contacts ATP.

This sequence belongs to the MurCDEF family.

Its subcellular location is the cytoplasm. It carries out the reaction UDP-N-acetyl-alpha-D-muramoyl-L-alanine + D-glutamate + ATP = UDP-N-acetyl-alpha-D-muramoyl-L-alanyl-D-glutamate + ADP + phosphate + H(+). The protein operates within cell wall biogenesis; peptidoglycan biosynthesis. Functionally, cell wall formation. Catalyzes the addition of glutamate to the nucleotide precursor UDP-N-acetylmuramoyl-L-alanine (UMA). This Streptococcus mutans serotype c (strain ATCC 700610 / UA159) protein is UDP-N-acetylmuramoylalanine--D-glutamate ligase.